Consider the following 1085-residue polypeptide: Activating transcription factor 7-interacting protein 1 (1085 aa).

9 disordered regions span residues 1–22 (MDNT…RASD), 47–109 (GKHE…VNVT), 127–245 (LGSN…NTDS), 329–381 (PNKS…VHSK), 469–499 (AAKE…ANAN), 517–560 (RNVG…TSSP), 650–843 (ASTN…TTIH), 889–910 (NSVR…QTGS), and 932–975 (GAPQ…ANTS). Over residues 54 to 64 (SDLNSPLSNTD) the composition is skewed to polar residues. 2 stretches are compositionally biased toward basic and acidic residues: residues 82 to 91 (SEIKRPESRA) and 133 to 150 (NFHE…RESD). Composition is skewed to polar residues over residues 151-165 (TPSG…NSFS) and 173-182 (NDITIISNSP). Basic and acidic residues-rich tracts occupy residues 347–379 (EREV…DSVH) and 469–479 (AAKEDMKKKQE). The stretch at 446-480 (NKRHKTVLTELQAKITRLTKRFGAAKEDMKKKQEN) forms a coiled coil. 3 stretches are compositionally biased toward low complexity: residues 487-499 (SSGK…ANAN), 529-547 (APVS…TPAS), and 651-666 (STNT…VSSP). The segment covering 667–717 (GVQRNSPASAGSVRTTLAVQAVSTTHPVAQTTRTSLPTVGTSGLHNSTSSR) has biased composition (polar residues). A compositionally biased stretch (low complexity) spans 732–743 (TAPTEPPTITAP). Polar residues-rich tracts occupy residues 746-775 (ENQT…VTGS), 792-810 (SSQA…AQSI), and 830-843 (TGVP…TTIH). The span at 950-968 (PRPVHPAPLPEAPQPPRLP) shows a compositional bias: pro residues. The Fibronectin type-III domain maps to 976–1082 (LPQKPQLKLA…DPQSTDVISS (107 aa)).

The protein belongs to the MCAF family.

The protein localises to the nucleus. Its function is as follows. Recruiter that couples transcriptional factors to general transcription apparatus and thereby modulates transcription regulation and chromatin formation. Can both act as an activator or a repressor depending on the context. Mediates MBD1-dependent transcriptional repression, probably by recruiting complexes containing histone methyltransferase activity. May belong to a complex that represses transcription and couples DNA methylation and histone H3 'Lys-9' trimethylation (H3K9me3). This chain is Activating transcription factor 7-interacting protein 1 (ATF7IP), found in Gallus gallus (Chicken).